Here is a 208-residue protein sequence, read N- to C-terminus: Outer-membrane lipoprotein carrier protein (208 aa).

Residues 1 to 22 (MKNLLCAVMLTSPLLYSTAVFA) form the signal peptide.

Belongs to the LolA family. In terms of assembly, monomer.

Its subcellular location is the periplasm. In terms of biological role, participates in the translocation of lipoproteins from the inner membrane to the outer membrane. Only forms a complex with a lipoprotein if the residue after the N-terminal Cys is not an aspartate (The Asp acts as a targeting signal to indicate that the lipoprotein should stay in the inner membrane). In Shewanella sp. (strain W3-18-1), this protein is Outer-membrane lipoprotein carrier protein.